Here is a 351-residue protein sequence, read N- to C-terminus: Synaptonemal complex central element protein 1 (351 aa).

Residues 1–10 (MAGRSLTSKA) show a composition bias toward polar residues. 2 disordered regions span residues 1 to 31 (MAGR…TSSQ) and 267 to 351 (KCQQ…KELF). Positions 52-290 (RVEVLINRIN…ELEKHGMQVP (239 aa)) form a coiled coil.

The protein belongs to the SYCE family. Homodimer. Found in a complex with SYCP1 and SYCE2. Interacts with SYCP1, SYCE2 and SYCE3. Interacts with SIX6OS1.

It is found in the nucleus. Its subcellular location is the chromosome. In terms of biological role, major component of the transverse central element of synaptonemal complexes (SCS), formed between homologous chromosomes during meiotic prophase. Requires SYCP1 in order to be incorporated into the central element. May have a role in the synaptonemal complex assembly, stabilization and recombination. The protein is Synaptonemal complex central element protein 1 (SYCE1) of Homo sapiens (Human).